Consider the following 257-residue polypeptide: Imidazole glycerol phosphate synthase subunit HisF (257 aa).

Catalysis depends on residues Asp11 and Asp130.

The protein belongs to the HisA/HisF family. As to quaternary structure, heterodimer of HisH and HisF.

The protein resides in the cytoplasm. The enzyme catalyses 5-[(5-phospho-1-deoxy-D-ribulos-1-ylimino)methylamino]-1-(5-phospho-beta-D-ribosyl)imidazole-4-carboxamide + L-glutamine = D-erythro-1-(imidazol-4-yl)glycerol 3-phosphate + 5-amino-1-(5-phospho-beta-D-ribosyl)imidazole-4-carboxamide + L-glutamate + H(+). The protein operates within amino-acid biosynthesis; L-histidine biosynthesis; L-histidine from 5-phospho-alpha-D-ribose 1-diphosphate: step 5/9. In terms of biological role, IGPS catalyzes the conversion of PRFAR and glutamine to IGP, AICAR and glutamate. The HisF subunit catalyzes the cyclization activity that produces IGP and AICAR from PRFAR using the ammonia provided by the HisH subunit. In Trichormus variabilis (strain ATCC 29413 / PCC 7937) (Anabaena variabilis), this protein is Imidazole glycerol phosphate synthase subunit HisF.